A 370-amino-acid chain; its full sequence is Aminomethyltransferase (370 aa).

This sequence belongs to the GcvT family. The glycine cleavage system is composed of four proteins: P, T, L and H.

The enzyme catalyses N(6)-[(R)-S(8)-aminomethyldihydrolipoyl]-L-lysyl-[protein] + (6S)-5,6,7,8-tetrahydrofolate = N(6)-[(R)-dihydrolipoyl]-L-lysyl-[protein] + (6R)-5,10-methylene-5,6,7,8-tetrahydrofolate + NH4(+). Its function is as follows. The glycine cleavage system catalyzes the degradation of glycine. This chain is Aminomethyltransferase, found in Prochlorococcus marinus (strain AS9601).